The chain runs to 132 residues: uncharacterized protein (132 aa).

This is an uncharacterized protein from Saccharomyces cerevisiae (strain ATCC 204508 / S288c) (Baker's yeast).